Consider the following 212-residue polypeptide: uncharacterized protein (212 aa).

The next 4 membrane-spanning stretches (helical) occupy residues 34–54 (IFGI…PAPG), 59–79 (FGVL…ELWL), 126–146 (ILMG…IPGT), and 171–191 (AGMI…YVFF).

The protein to R.meliloti ExoD.

Its subcellular location is the cell membrane. This is an uncharacterized protein from Synechocystis sp. (strain ATCC 27184 / PCC 6803 / Kazusa).